A 273-amino-acid chain; its full sequence is DnaJ homolog subfamily C member 27 (273 aa).

The segment at 1–18 (MEANMPKRKEPGRSLRIK) is required for interaction with MAPK1. Residues 23–30 (GNAEVGKS), 71–75 (DMAGH), and 134–137 (NKID) each bind GTP. One can recognise a J domain in the interval 217-273 (GSWDMLGVKPGASRDEVNKACRKLAVLLHPDKCVAPGSEDAFKAVVNARTALLKNIK).

It belongs to the small GTPase superfamily. Rab family. Interacts directly with MAPK1 (wild-type and kinase-deficient forms). Interacts directly (in GTP-bound form) with MAP2K1 (wild-type and kinase-deficient forms).

The protein localises to the nucleus. Functionally, GTPase which can activate the MEK/ERK pathway and induce cell transformation when overexpressed. May act as a nuclear scaffold for MAPK1, probably by association with MAPK1 nuclear export signal leading to enhanced ERK1/ERK2 signaling. The sequence is that of DnaJ homolog subfamily C member 27 (DNAJC27) from Pongo abelii (Sumatran orangutan).